We begin with the raw amino-acid sequence, 296 residues long: Large ribosomal subunit protein uL15m (296 aa).

The transit peptide at 1 to 20 (MAASGGSGGKATELLRCLPR) directs the protein to the mitochondrion. The tract at residues 25-66 (NLRPNPGARHREKRRGRGIHGGRKSGRGHKGETQRGNQPRLG) is disordered. Residues 32–52 (ARHREKRRGRGIHGGRKSGRG) are compositionally biased toward basic residues.

The protein belongs to the universal ribosomal protein uL15 family. As to quaternary structure, component of the mitochondrial ribosome large subunit (39S) which comprises a 16S rRNA and about 50 distinct proteins.

The protein localises to the mitochondrion. The polypeptide is Large ribosomal subunit protein uL15m (mrpl15) (Xenopus laevis (African clawed frog)).